The chain runs to 815 residues: Putative transcription factor phnE (815 aa).

Positions 522–577 are disordered; the sequence is PSRRNSDGSAHSSPSSTPSSSSTSSPLPSPASERPPPLDVVTRPSTGTSTPSSPTL. A compositionally biased stretch (low complexity) spans 523–547; that stretch reads SRRNSDGSAHSSPSSTPSSSSTSSP. Residues 548-559 show a composition bias toward pro residues; the sequence is LPSPASERPPPL. A compositionally biased stretch (low complexity) spans 563–577; that stretch reads TRPSTGTSTPSSPTL.

It is found in the nucleus. Putative transcription factor that may be involved in the regulation of the expression of the gene cluster that mediates the biosynthesis of phenalenones such as herqueinone, compounds that have been reported to treat tumors, bacterial infections and/or mycoses, and rheumatic diseases. The chain is Putative transcription factor phnE from Penicillium herquei.